Consider the following 420-residue polypeptide: Glucose-1-phosphate adenylyltransferase (420 aa).

Alpha-D-glucose 1-phosphate-binding positions include Y107, G172, 187–188 (EK), and S205.

Belongs to the bacterial/plant glucose-1-phosphate adenylyltransferase family. Homotetramer.

The catalysed reaction is alpha-D-glucose 1-phosphate + ATP + H(+) = ADP-alpha-D-glucose + diphosphate. It participates in glycan biosynthesis; glycogen biosynthesis. In terms of biological role, involved in the biosynthesis of ADP-glucose, a building block required for the elongation reactions to produce glycogen. Catalyzes the reaction between ATP and alpha-D-glucose 1-phosphate (G1P) to produce pyrophosphate and ADP-Glc. This chain is Glucose-1-phosphate adenylyltransferase, found in Rhizobium leguminosarum bv. trifolii (strain WSM2304).